The sequence spans 368 residues: Nucleotide pyrophosphatase/phosphodiesterase (368 aa).

It belongs to the metallophosphoesterase superfamily. In terms of assembly, monomer and homomer. In terms of processing, glycosylated.

It is found in the plastid. The protein resides in the chloroplast. In terms of biological role, hydrolyzes pyrophosphate, phosphodiester and phosphosulfate linkages of nucleotide-sugars, sulfonucleotides and nucleoside di and triphosphates. Highest activity observed with the substrates ADP-glucose and adenosine 5'-phosphosulfate. This is Nucleotide pyrophosphatase/phosphodiesterase from Hordeum vulgare (Barley).